Consider the following 489-residue polypeptide: Probable guanine deaminase (489 aa).

Residues His100 and His102 each coordinate Zn(2+). Substrate-binding positions include 102–105 (HVSQ), 231–232 (RF), 258–261 (HLSE), and Asp348. Positions 258 and 348 each coordinate Zn(2+).

The protein belongs to the metallo-dependent hydrolases superfamily. ATZ/TRZ family. It depends on Zn(2+) as a cofactor.

Its subcellular location is the cytoplasm. It catalyses the reaction guanine + H2O + H(+) = xanthine + NH4(+). It functions in the pathway purine metabolism; guanine degradation; xanthine from guanine: step 1/1. Functionally, catalyzes the hydrolytic deamination of guanine, producing xanthine and ammonia. This Saccharomyces cerevisiae (strain ATCC 204508 / S288c) (Baker's yeast) protein is Probable guanine deaminase (GUD1).